A 416-amino-acid chain; its full sequence is Serine/threonine transporter SstT (416 aa).

Transmembrane regions (helical) follow at residues 15-35 (SLVS…MFMP), 49-69 (VGAL…AAII), 82-102 (ILLL…VASF), 141-161 (ALMD…GIAM), 192-212 (LGIL…ALFG), 217-237 (LVVL…IIVF), 288-308 (VSIP…ITVL), 330-350 (VVAT…LLLI), and 356-376 (LFGI…IIGV).

The protein belongs to the dicarboxylate/amino acid:cation symporter (DAACS) (TC 2.A.23) family.

The protein resides in the cell inner membrane. The enzyme catalyses L-serine(in) + Na(+)(in) = L-serine(out) + Na(+)(out). The catalysed reaction is L-threonine(in) + Na(+)(in) = L-threonine(out) + Na(+)(out). Involved in the import of serine and threonine into the cell, with the concomitant import of sodium (symport system). The sequence is that of Serine/threonine transporter SstT from Aeromonas salmonicida (strain A449).